A 53-amino-acid polypeptide reads, in one-letter code: Small ribosomal subunit protein uS14 (53 aa).

Positions 18, 21, 36, and 39 each coordinate Zn(2+).

This sequence belongs to the universal ribosomal protein uS14 family. Zinc-binding uS14 subfamily. Part of the 30S ribosomal subunit. Zn(2+) is required as a cofactor.

Its function is as follows. Binds 16S rRNA, required for the assembly of 30S particles. The sequence is that of Small ribosomal subunit protein uS14 from Thermoplasma volcanium (strain ATCC 51530 / DSM 4299 / JCM 9571 / NBRC 15438 / GSS1).